Here is a 177-residue protein sequence, read N- to C-terminus: Large ribosomal subunit protein eL20 (177 aa).

This sequence belongs to the eukaryotic ribosomal protein eL20 family.

The sequence is that of Large ribosomal subunit protein eL20 (RpL18A) from Spodoptera frugiperda (Fall armyworm).